The following is a 508-amino-acid chain: Anthranilate synthase component 1 (508 aa).

Residues Ser51 and 283 to 285 (PYM) each bind L-tryptophan. Residue 323–324 (GT) coordinates chorismate. Position 350 (Glu350) interacts with Mg(2+). Chorismate contacts are provided by residues Tyr438, Arg458, 477–479 (GAG), and Gly479. Glu492 lines the Mg(2+) pocket.

The protein belongs to the anthranilate synthase component I family. In terms of assembly, heterotetramer consisting of two non-identical subunits: a beta subunit (TrpG) and a large alpha subunit (TrpE). Requires Mg(2+) as cofactor.

It carries out the reaction chorismate + L-glutamine = anthranilate + pyruvate + L-glutamate + H(+). The protein operates within amino-acid biosynthesis; L-tryptophan biosynthesis; L-tryptophan from chorismate: step 1/5. Its activity is regulated as follows. Feedback inhibited by tryptophan. In terms of biological role, part of a heterotetrameric complex that catalyzes the two-step biosynthesis of anthranilate, an intermediate in the biosynthesis of L-tryptophan. In the first step, the glutamine-binding beta subunit (TrpG) of anthranilate synthase (AS) provides the glutamine amidotransferase activity which generates ammonia as a substrate that, along with chorismate, is used in the second step, catalyzed by the large alpha subunit of AS (TrpE) to produce anthranilate. In the absence of TrpG, TrpE can synthesize anthranilate directly from chorismate and high concentrations of ammonia. This chain is Anthranilate synthase component 1 (trpE), found in Synechocystis sp. (strain ATCC 27184 / PCC 6803 / Kazusa).